A 107-amino-acid polypeptide reads, in one-letter code: uncharacterized protein (107 aa).

Positions 86–107 (QVSNHEEDADVLETQDDNAEQV) are disordered. Over residues 92 to 107 (EDADVLETQDDNAEQV) the composition is skewed to acidic residues.

This is an uncharacterized protein from Rickettsia prowazekii (strain Madrid E).